Consider the following 718-residue polypeptide: Sodium/myo-inositol cotransporter (718 aa).

At methionine 1–aspartate 9 the chain is on the extracellular side. A helical transmembrane segment spans residues isoleucine 10–tryptophan 29. The Cytoplasmic segment spans residues lysine 30–glycine 38. A helical membrane pass occupies residues tyrosine 39–valine 57. Residues serine 58–alanine 86 are Extracellular-facing. A helical membrane pass occupies residues leucine 87–proline 110. The Cytoplasmic portion of the chain corresponds to glutamate 111–glutamine 123. Residues valine 124–tyrosine 144 traverse the membrane as a helical segment. At serine 145–asparagine 157 the chain is on the extracellular side. A helical membrane pass occupies residues leucine 158 to tyrosine 183. The Cytoplasmic portion of the chain corresponds to threonine 184–threonine 186. Residues leucine 187–valine 205 form a helical membrane-spanning segment. Topologically, residues lysine 206–glycine 303 are extracellular. Asparagine 232 carries an N-linked (GlcNAc...) asparagine glycan. The helical transmembrane segment at phenylalanine 304–phenylalanine 324 threads the bilayer. Residues alanine 325–arginine 353 lie on the Cytoplasmic side of the membrane. A helical transmembrane segment spans residues leucine 354–methionine 376. Topologically, residues serine 377–glutamate 406 are extracellular. The helical transmembrane segment at leucine 407 to valine 430 threads the bilayer. Over glutamate 431–glutamate 443 the chain is Cytoplasmic. A helical membrane pass occupies residues valine 444–tryptophan 462. Residues lysine 463–histidine 510 are Extracellular-facing. The chain crosses the membrane as a helical span at residues tyrosine 511–leucine 532. The Cytoplasmic portion of the chain corresponds to threonine 533 to lysine 695. Phosphoserine occurs at positions 594 and 632. A helical transmembrane segment spans residues valine 696–phenylalanine 716. Topologically, residues serine 717–leucine 718 are extracellular.

Belongs to the sodium:solute symporter (SSF) (TC 2.A.21) family. In terms of assembly, interacts with KCNQ2 (via the pore module). Interacts with KCNQ1; this interaction is direct. Forms coregulatory complexes with ion channels KCNQ2-KCNQ3 and KCNQ1-KCNE2. In terms of tissue distribution, highly expressed in kidney, placenta, and brain and at a lesser extent in thymus, lung, bladder, and testes. Expressed in the choroid plexus epithelium (at protein level).

It is found in the apical cell membrane. Its subcellular location is the basolateral cell membrane. The catalysed reaction is myo-inositol(out) + 2 Na(+)(out) = myo-inositol(in) + 2 Na(+)(in). It carries out the reaction scyllo-inositol(out) + 2 Na(+)(out) = scyllo-inositol(in) + 2 Na(+)(in). In terms of biological role, electrogenic Na(+)-coupled sugar symporter that actively transports myo-inositol and its stereoisomer scyllo-inositol across the plasma membrane, with a Na(+) to sugar coupling ratio of 2:1. Maintains myo-inositol concentration gradient that defines cell volume and fluid balance during osmotic stress, in particular in the fetoplacental unit and central nervous system. Forms coregulatory complexes with voltage-gated K(+) ion channels, allosterically altering ion selectivity, voltage dependence and gating kinetics of the channel. In turn, K(+) efflux through the channel forms a local electrical gradient that modulates electrogenic Na(+)-coupled myo-inositol influx through the transporter. Associates with KCNQ1-KCNE2 channel in the apical membrane of choroid plexus epithelium and regulates the myo-inositol gradient between blood and cerebrospinal fluid with an impact on neuron excitability. Associates with KCNQ2-KCNQ3 channel altering ion selectivity, increasing Na(+) and Cs(+) permeation relative to K(+) permeation. Provides myo-inositol precursor for biosynthesis of phosphoinositides such as PI(4,5)P2, thus indirectly affecting the activity of phosphoinositide-dependent ion channels and Ca(2+) signaling upon osmotic stress. (Microbial infection) Functions as a retroviral receptor for M813 murine leukemia virus (MuLV) entry. In Mus musculus (Mouse), this protein is Sodium/myo-inositol cotransporter (Slc5a3).